The chain runs to 175 residues: Gamma-crystallin A (175 aa).

Beta/gamma crystallin 'Greek key' domains follow at residues 2-40 and 41-83; these read GKITFYEDRGFQGHCYQCSSNNCLQQPYFSRCNSIRVDV and HSWF…RLIP. Positions 84-88 are connecting peptide; sequence QHTGT. Beta/gamma crystallin 'Greek key' domains follow at residues 89-129 and 130-172; these read FRMR…RVLE and GSWV…RRVM.

Belongs to the beta/gamma-crystallin family.

Functionally, crystallins are the dominant structural components of the vertebrate eye lens. This chain is Gamma-crystallin A (CRYGA), found in Bos taurus (Bovine).